Here is a 147-residue protein sequence, read N- to C-terminus: Basic phospholipase A2 beta-bungarotoxin A2 chain (147 aa).

An N-terminal signal peptide occupies residues 1–19 (MYPAHLLVLSAVCVSLLGA). The propeptide occupies 20–27 (ANIPPYPL). 6 cysteine pairs are disulfide-bonded: Cys54–Cys146, Cys56–Cys72, Cys71–Cys127, Cys78–Cys120, Cys88–Cys113, and Cys106–Cys118. Residues Tyr55, Gly57, and Gly59 each contribute to the Ca(2+) site. His75 is an active-site residue. Residue Asp76 coordinates Ca(2+). Residue Asp121 is part of the active site.

This sequence belongs to the phospholipase A2 family. Group I subfamily. D49 sub-subfamily. As to quaternary structure, heterodimer; disulfide-linked. The A chains have phospholipase A2 activity and the B chains show homology with the basic protease inhibitors. Ca(2+) is required as a cofactor. Expressed by the venom gland.

It localises to the secreted. The catalysed reaction is a 1,2-diacyl-sn-glycero-3-phosphocholine + H2O = a 1-acyl-sn-glycero-3-phosphocholine + a fatty acid + H(+). Functionally, snake venom phospholipase A2 (PLA2) that inhibits neuromuscular transmission by blocking acetylcholine release from the nerve termini. PLA2 catalyzes the calcium-dependent hydrolysis of the 2-acyl groups in 3-sn-phosphoglycerides. The sequence is that of Basic phospholipase A2 beta-bungarotoxin A2 chain from Bungarus caeruleus (Indian krait).